A 139-amino-acid polypeptide reads, in one-letter code: Putative pre-16S rRNA nuclease (139 aa).

The protein belongs to the YqgF nuclease family.

The protein localises to the cytoplasm. Its function is as follows. Could be a nuclease involved in processing of the 5'-end of pre-16S rRNA. The polypeptide is Putative pre-16S rRNA nuclease (Rippkaea orientalis (strain PCC 8801 / RF-1) (Cyanothece sp. (strain PCC 8801))).